The sequence spans 218 residues: GEM-like protein 6 (218 aa).

One can recognise a GRAM domain in the interval lysine 96–glutamine 174.

This sequence belongs to the GEM family.

The chain is GEM-like protein 6 from Arabidopsis thaliana (Mouse-ear cress).